A 287-amino-acid chain; its full sequence is Protease HtpX (287 aa).

2 consecutive transmembrane segments (helical) span residues 4–24 (IFLL…VMSI) and 33–53 (GGLL…SLAI). Residue His139 participates in Zn(2+) binding. Glu140 is an active-site residue. Zn(2+) is bound at residue His143. 2 consecutive transmembrane segments (helical) span residues 154-174 (LIQG…AGII) and 195-215 (AVVF…VAYF). Glu220 contributes to the Zn(2+) binding site.

This sequence belongs to the peptidase M48B family. Zn(2+) serves as cofactor.

It localises to the cell inner membrane. This is Protease HtpX from Shewanella sp. (strain MR-4).